Reading from the N-terminus, the 167-residue chain is NAD(P)H-quinone oxidoreductase subunit I, chloroplastic (167 aa).

2 4Fe-4S ferredoxin-type domains span residues 55 to 84 and 95 to 124; these read GRIH…VDWK and LNYS…MTEE. Residues Cys64, Cys67, Cys70, Cys74, Cys104, Cys107, Cys110, and Cys114 each contribute to the [4Fe-4S] cluster site.

The protein belongs to the complex I 23 kDa subunit family. In terms of assembly, NDH is composed of at least 16 different subunits, 5 of which are encoded in the nucleus. Requires [4Fe-4S] cluster as cofactor.

The protein localises to the plastid. The protein resides in the chloroplast thylakoid membrane. The enzyme catalyses a plastoquinone + NADH + (n+1) H(+)(in) = a plastoquinol + NAD(+) + n H(+)(out). It carries out the reaction a plastoquinone + NADPH + (n+1) H(+)(in) = a plastoquinol + NADP(+) + n H(+)(out). Functionally, NDH shuttles electrons from NAD(P)H:plastoquinone, via FMN and iron-sulfur (Fe-S) centers, to quinones in the photosynthetic chain and possibly in a chloroplast respiratory chain. The immediate electron acceptor for the enzyme in this species is believed to be plastoquinone. Couples the redox reaction to proton translocation, and thus conserves the redox energy in a proton gradient. The protein is NAD(P)H-quinone oxidoreductase subunit I, chloroplastic of Gossypium barbadense (Sea Island cotton).